A 241-amino-acid polypeptide reads, in one-letter code: Phosducin-like protein 2 (241 aa).

A Phosducin domain is found at 34-202 (VLRLQKEAMV…EWKLAEVGAI (169 aa)). The tract at residues 89-241 (FGELREISGN…DSSNSDNDTK (153 aa)) is thioredoxin fold.

The protein belongs to the phosducin family. As to quaternary structure, interacts with the CCT chaperonin complex and actin. In terms of tissue distribution, testis-specific.

It localises to the endoplasmic reticulum. Its function is as follows. Essential for male fertility, spermiogenesis and acrosome formation. In Homo sapiens (Human), this protein is Phosducin-like protein 2 (PDCL2).